The chain runs to 400 residues: Enoyl-[acyl-carrier-protein] reductase [NADH] (400 aa).

NAD(+) contacts are provided by residues G48–Y53, F74–E75, D111–A112, and L139–A140. Position 225 (Y225) interacts with substrate. The active-site Proton donor is the Y235. NAD(+) is bound by residues K244 and V273–T275.

The protein belongs to the TER reductase family. In terms of assembly, monomer.

The enzyme catalyses a 2,3-saturated acyl-[ACP] + NAD(+) = a (2E)-enoyl-[ACP] + NADH + H(+). The protein operates within lipid metabolism; fatty acid biosynthesis. Functionally, involved in the final reduction of the elongation cycle of fatty acid synthesis (FAS II). Catalyzes the reduction of a carbon-carbon double bond in an enoyl moiety that is covalently linked to an acyl carrier protein (ACP). The protein is Enoyl-[acyl-carrier-protein] reductase [NADH] of Aliivibrio fischeri (strain MJ11) (Vibrio fischeri).